The sequence spans 393 residues: Stearoyl-[acyl-carrier-protein] 9-desaturase, chloroplastic (393 aa).

A chloroplast-targeting transit peptide spans 1–30 (MALNINGVSLKSHKMLPFPCSSARSERVFM). Residues E135, E173, H176, E259, and H262 each coordinate Fe cation.

This sequence belongs to the fatty acid desaturase type 2 family. Homodimer. Fe(2+) is required as a cofactor.

The protein resides in the plastid. It localises to the chloroplast. It catalyses the reaction octadecanoyl-[ACP] + 2 reduced [2Fe-2S]-[ferredoxin] + O2 + 2 H(+) = (9Z)-octadecenoyl-[ACP] + 2 oxidized [2Fe-2S]-[ferredoxin] + 2 H2O. It functions in the pathway lipid metabolism; fatty acid metabolism. Functionally, converts stearoyl-ACP to oleoyl-ACP by introduction of a cis double bond between carbons 9 and 10 of the acyl chain. In Solanum tuberosum (Potato), this protein is Stearoyl-[acyl-carrier-protein] 9-desaturase, chloroplastic.